A 417-amino-acid chain; its full sequence is NADH-quinone oxidoreductase subunit D (417 aa).

Belongs to the complex I 49 kDa subunit family. As to quaternary structure, NDH-1 is composed of 14 different subunits. Subunits NuoB, C, D, E, F, and G constitute the peripheral sector of the complex.

It localises to the cell inner membrane. The enzyme catalyses a quinone + NADH + 5 H(+)(in) = a quinol + NAD(+) + 4 H(+)(out). Functionally, NDH-1 shuttles electrons from NADH, via FMN and iron-sulfur (Fe-S) centers, to quinones in the respiratory chain. The immediate electron acceptor for the enzyme in this species is believed to be ubiquinone. Couples the redox reaction to proton translocation (for every two electrons transferred, four hydrogen ions are translocated across the cytoplasmic membrane), and thus conserves the redox energy in a proton gradient. The chain is NADH-quinone oxidoreductase subunit D from Burkholderia vietnamiensis (strain G4 / LMG 22486) (Burkholderia cepacia (strain R1808)).